The chain runs to 110 residues: UPF0060 membrane protein Mmwyl1_1139 (110 aa).

Transmembrane regions (helical) follow at residues 7–27 (ISLF…PYLW), 33–53 (TIWL…LLTL), 63–83 (AAYG…VDGI), and 87–107 (TWDM…MFAP).

It belongs to the UPF0060 family.

Its subcellular location is the cell inner membrane. The polypeptide is UPF0060 membrane protein Mmwyl1_1139 (Marinomonas sp. (strain MWYL1)).